Here is a 230-residue protein sequence, read N- to C-terminus: Protein FAM3A (230 aa).

An N-terminal signal peptide occupies residues 1-33; the sequence is MRLAGPLRIVALIIIMGLTWILVTILLGGPGVG. 2 cysteine pairs are disulfide-bonded: Cys-59-Cys-87 and Cys-65-Cys-222. The GG-type lectin domain maps to 68-226; the sequence is EHLSFRIVSG…LEMEGCIPRR (159 aa).

It belongs to the FAM3 family.

It localises to the secreted. This Mus musculus (Mouse) protein is Protein FAM3A (Fam3a).